The primary structure comprises 876 residues: ATPase WRNIP1 (876 aa).

Low complexity-rich tracts occupy residues 56 to 85 (NKSN…TPTK) and 104 to 175 (NNNN…INNN). A disordered region spans residues 56–175 (NKSNGNNSIN…NNNNNNINNN (120 aa)). Position 240–246 (240–246 (PGCGKTT)) interacts with ATP. 3 disordered regions span residues 621 to 647 (KDRQ…PQQQ), 714 to 737 (INNK…LNPT), and 833 to 876 (ETKA…SLDF). 2 stretches are compositionally biased toward low complexity: residues 626–647 (SQDQ…PQQQ) and 714–731 (INNK…VNNS). Positions 835–849 (KAISSTDTKESVSIN) are enriched in polar residues. Basic and acidic residues predominate over residues 850 to 863 (DSDKDLTTTHKNEQ).

Belongs to the AAA ATPase family. RarA/MGS1/WRNIP1 subfamily.

The protein localises to the nucleus. The enzyme catalyses ATP + H2O = ADP + phosphate + H(+). Its function is as follows. Functions as a modulator for initiation or reinitiation events during DNA polymerase delta-mediated DNA synthesis. Has an intrinsic ATPase activity that functions as a sensor of DNA damage or of arrested replication forks and regulates the extent of DNA synthesis. This is ATPase WRNIP1 from Dictyostelium discoideum (Social amoeba).